The following is a 157-amino-acid chain: Probable Brix domain-containing ribosomal biogenesis protein (157 aa).

In terms of domain architecture, Brix spans methionine 1–tyrosine 157.

In terms of biological role, probably involved in the biogenesis of the ribosome. The chain is Probable Brix domain-containing ribosomal biogenesis protein from Methanosarcina barkeri (strain Fusaro / DSM 804).